A 246-amino-acid chain; its full sequence is MTNNAAAPLYSLRGLPLIGWRDMSHALNYLFADGQLKQGTLVAINAEKLLTAEDNPEVRALIAAAEFKYADGISVVRSIRKKFPQAQVSRVAGADLWEALMARAGKEGTPVFLVGGKPEVLAQTEAKLRTQWNVNIVGSQDGYFTPEQRQALFARIHASGAKIVTVAMGSPKQELLMRDCREVHPHALYMGVGGTYDVFTGHVKRAPKIWQNLGLEWLYRLLSQPRRITRQMRLLRYLRWHYTGDL.

The protein belongs to the glycosyltransferase 26 family.

The enzyme catalyses UDP-N-acetyl-alpha-D-mannosaminouronate + N-acetyl-alpha-D-glucosaminyl-di-trans,octa-cis-undecaprenyl diphosphate = beta-D-ManNAcA-(1-&gt;4)-alpha-D-GlcNAc-di-trans,octa-cis-undecaprenyl diphosphate + UDP + H(+). It participates in bacterial outer membrane biogenesis; enterobacterial common antigen biosynthesis. In terms of biological role, catalyzes the synthesis of Und-PP-GlcNAc-ManNAcA (Lipid II), the second lipid-linked intermediate involved in enterobacterial common antigen (ECA) synthesis. This chain is UDP-N-acetyl-D-mannosaminuronic acid transferase, found in Salmonella dublin (strain CT_02021853).